The primary structure comprises 499 residues: MSNLPWLTIIVILPISAGLLIPLFPHKGNKMIRWYTLGICLLDLLLMTYIFRYHYHFDNSLIQLEEDYNWINLIHFHWKLGIDGFSIGLILLTGFVTTLATLAAWPVTRNPRLLHFLMLAMYSGQLGLFASRDILLFFLMWELELIPVYLLLSMWGGKRRLYSATKFLLYTAGGSIFILMGALSMGLYGSHGPTFDFELLAKKDYPITLEILLYLGFLIAYAIKLPIFPLHTWLPDTHGEAHYSTCMLLAGVLLKMGGYGLIRINMELLPHAHSLFSPWLIIIGAVQIIYAALTSMGQRNLKRRIAYSSISHMGFVIIGIGSMTYTGLNGAILQMISHGLIGAALFFLVGTSYDRIRTLFLDEMGGIAIPIPKIFTMFSSFSMASLALPGMSGFVAEFMIFLGVITNHKYSSTFRIIITAIAAIGMILTPIYLLSMLRRMFYGYKVLNVPNPYFKDSGPRELFILICLFLPIIGIGLYPDLVLFLYNAKVEAIFSQSFY.

The next 14 helical transmembrane spans lie at 4 to 24 (LPWL…IPLF), 31 to 51 (MIRW…TYIF), 87 to 107 (IGLI…AWPV), 113 to 130 (LLHF…GLFA), 134 to 154 (ILLF…LLSM), 167 to 187 (FLLY…SMGL), 211 to 231 (ILLY…FPLH), 242 to 262 (HYST…YGLI), 274 to 294 (SLFS…AALT), 305 to 325 (IAYS…SMTY), 330 to 350 (GAIL…FLVG), 386 to 406 (LALP…GVIT), 416 to 436 (IIIT…LLSM), and 462 to 482 (LFIL…PDLV).

Belongs to the complex I subunit 4 family.

Its subcellular location is the plastid. The protein resides in the chloroplast thylakoid membrane. The enzyme catalyses a plastoquinone + NADH + (n+1) H(+)(in) = a plastoquinol + NAD(+) + n H(+)(out). It catalyses the reaction a plastoquinone + NADPH + (n+1) H(+)(in) = a plastoquinol + NADP(+) + n H(+)(out). This chain is NAD(P)H-quinone oxidoreductase chain 4, chloroplastic, found in Cryptomeria japonica (Japanese cedar).